The following is a 148-amino-acid chain: Oleosin 1 (148 aa).

An N-acetylalanine modification is found at alanine 2. Residues 2–28 (ADQHFQQPLHFQGSYGQQQPRSYQVAK) are polar. The tract at residues 29–148 (AATAVTAGGS…HVPSGQQQSS (120 aa)) is hydrophobic. 2 consecutive transmembrane segments (helical) span residues 37–57 (GSLLVLSGLVLAGTVIALTIA) and 81–101 (GFLTSGGFGVAAVTVLSWIYK).

It belongs to the oleosin family.

Its subcellular location is the lipid droplet. It localises to the membrane. May have a structural role to stabilize the lipid body during desiccation of the seed by preventing coalescence of the oil. Probably interacts with both lipid and phospholipid moieties of lipid bodies. May also provide recognition signals for specific lipase anchorage in lipolysis during seedling growth. This is Oleosin 1 (OLE1) from Prunus dulcis (Almond).